Reading from the N-terminus, the 440-residue chain is 6-phospho-alpha-glucosidase (440 aa).

4–70 (FSIVVAGGGS…PDINFVYTTD (67 aa)) contacts NAD(+). Arginine 93 and asparagine 147 together coordinate substrate. Cysteine 169 serves as a coordination point for Mn(2+). Aspartate 170 serves as the catalytic Proton donor. A Mn(2+)-binding site is contributed by histidine 200. Tyrosine 263 serves as the catalytic Proton acceptor. Arginine 283 is a substrate binding site.

This sequence belongs to the glycosyl hydrolase 4 family. In terms of assembly, homodimer. It depends on NAD(+) as a cofactor. Requires Mn(2+) as cofactor.

It functions in the pathway glycan degradation; palatinose degradation. Functionally, in vitro, readily hydrolyzes p-nitrophenyl-alpha-D-glucopyranoside 6-phosphate (pNPalphaG6P), a chromogenic analog of the phosphorylated isomers of sucrose. In vivo, is probably involved in the degradation of the 6-phosphate derivatives of the sucrose isomers trehalulose, turanose, maltulose and palatinose, catalyzing their hydrolysis into glucose 6-phosphate (G6P) and fructose, which allows the bacterium to use these sugars as energy sources for growth. Is not able to hydrolyze the C2 or C4 chromogenic stereomers (i.e. pNPalpha-mannopyranoside-6P and pNPalpha-galactopyranoside-6P, respectively). The polypeptide is 6-phospho-alpha-glucosidase (pagL) (Leptotrichia buccalis (strain ATCC 14201 / DSM 1135 / JCM 12969 / NCTC 10249 / C-1013-b)).